The primary structure comprises 468 residues: Serine/threonine-protein phosphatase 2A 55 kDa regulatory subunit B beta isoform (468 aa).

WD repeat units follow at residues 47-86 (SSAD…KNQP), 112-153 (EIEE…KRPE), 196-234 (AHTY…RSFN), 245-285 (ELTE…LCDK), 304-342 (EIIS…RPIE), 359-400 (ENDC…DVTL), and 435-468 (DFSK…DKVN).

The protein belongs to the phosphatase 2A regulatory subunit B family. In terms of assembly, PP2A consists of a common heterodimeric core enzyme, composed of a 36 kDa catalytic subunit (subunit C) and a 65 kDa constant regulatory subunit (PR65 or subunit A), that associates with a variety of regulatory subunits.

It is found in the cytoplasm. The protein resides in the cytoskeleton. It localises to the membrane. In terms of biological role, the B regulatory subunit might modulate substrate selectivity and catalytic activity, and might also direct the localization of the catalytic enzyme to a particular subcellular compartment. Negatively controls the initiation of oocyte maturation. The polypeptide is Serine/threonine-protein phosphatase 2A 55 kDa regulatory subunit B beta isoform (ppp2r2b) (Xenopus laevis (African clawed frog)).